Here is a 575-residue protein sequence, read N- to C-terminus: 4-substituted benzoates-glutamate ligase GH3.12 (575 aa).

Residues 6–33 (DINETFEKQLKDLTSNVKSIQDNLLEEI) are a coiled coil. 95 to 96 (SS) is an AMP binding site. 120 to 123 (YDLR) contributes to the salicylate binding site. AMP contacts are provided by T301, T324, S328, Y347, D398, and R417.

Belongs to the IAA-amido conjugating enzyme family. Interacts with the P.syringae pv. maculicola effector HopW1-1 (via C-terminus). Expressed in seedlings, mostly in cotyledons, leaves, hypocotyls and sporadically in roots. Not detected in unchallenged adult plants, except in flowers.

Its activity is regulated as follows. Specifically and reversibly inhibited by salicylic acid (SA). Its function is as follows. Catalyzes the conjugation of specific amino acids (e.g. Glu and possibly His, Lys, and Met) to their preferred acyl substrates (e.g. 4-substituted benzoates), in a magnesium ion- and ATP-dependent manner. Can use 4-substituted benzoates such as 4-aminobenzoate (pABA), 4-fluorobenzoate and 4-hydroxybenzoate (4-HBA), and, to a lesser extent, benzoate, vanillate and trans-cinnamate, but not 2-substituted benzoates and salicylic acid (SA), as conjugating acyl substrates. Involved in both basal and induced resistance in a SA-dependent manner. Confers resistance to virulent and avirulent pathogens (at least bacteria and oomycetes), and promotes SA glucosides accumulation. Required for the establishment of hyper-sensitive response (HR) upon incompatible interaction and subsequent systemic acquired resistance (SAR). The sequence is that of 4-substituted benzoates-glutamate ligase GH3.12 (GH3.12) from Arabidopsis thaliana (Mouse-ear cress).